Reading from the N-terminus, the 247-residue chain is Cell division protein ZapD (247 aa).

The protein belongs to the ZapD family. Interacts with FtsZ.

The protein resides in the cytoplasm. In terms of biological role, cell division factor that enhances FtsZ-ring assembly. Directly interacts with FtsZ and promotes bundling of FtsZ protofilaments, with a reduction in FtsZ GTPase activity. This Klebsiella pneumoniae subsp. pneumoniae (strain ATCC 700721 / MGH 78578) protein is Cell division protein ZapD.